A 186-amino-acid chain; its full sequence is Peptidyl-tRNA hydrolase (186 aa).

A tRNA-binding site is contributed by tyrosine 16. The active-site Proton acceptor is the histidine 21. The tRNA site is built by tyrosine 60 and asparagine 62.

It belongs to the PTH family. Monomer.

The protein localises to the cytoplasm. It carries out the reaction an N-acyl-L-alpha-aminoacyl-tRNA + H2O = an N-acyl-L-amino acid + a tRNA + H(+). Its function is as follows. Hydrolyzes ribosome-free peptidyl-tRNAs (with 1 or more amino acids incorporated), which drop off the ribosome during protein synthesis, or as a result of ribosome stalling. In terms of biological role, catalyzes the release of premature peptidyl moieties from peptidyl-tRNA molecules trapped in stalled 50S ribosomal subunits, and thus maintains levels of free tRNAs and 50S ribosomes. This Tropheryma whipplei (strain TW08/27) (Whipple's bacillus) protein is Peptidyl-tRNA hydrolase.